A 225-amino-acid chain; its full sequence is Potassium-transporting ATPase KdpC subunit (225 aa).

A helical transmembrane segment spans residues 18-38 (ALLVLTVVTGIVYPLVVTGVA). Residues 134-161 (NSVPGHPVRPEDVPADAVTSSGSGLDPD) form a disordered region.

Belongs to the KdpC family. In terms of assembly, the system is composed of three essential subunits: KdpA, KdpB and KdpC.

Its subcellular location is the cell membrane. In terms of biological role, part of the high-affinity ATP-driven potassium transport (or Kdp) system, which catalyzes the hydrolysis of ATP coupled with the electrogenic transport of potassium into the cytoplasm. This subunit acts as a catalytic chaperone that increases the ATP-binding affinity of the ATP-hydrolyzing subunit KdpB by the formation of a transient KdpB/KdpC/ATP ternary complex. This chain is Potassium-transporting ATPase KdpC subunit, found in Streptomyces coelicolor (strain ATCC BAA-471 / A3(2) / M145).